Here is a 442-residue protein sequence, read N- to C-terminus: Glutamyl-tRNA(Gln) amidotransferase subunit D (442 aa).

Positions 63 to 84 (TQTDIGSSAGAGADTEADKTES) are disordered. The 328-residue stretch at 102 to 429 (PTVSLISTGG…PDPTNAMRKS (328 aa)) folds into the Asparaginase/glutaminase domain. Catalysis depends on residues threonine 112, threonine 188, aspartate 189, and lysine 265.

It belongs to the asparaginase 1 family. GatD subfamily. Heterodimer of GatD and GatE.

It carries out the reaction L-glutamyl-tRNA(Gln) + L-glutamine + ATP + H2O = L-glutaminyl-tRNA(Gln) + L-glutamate + ADP + phosphate + H(+). Functionally, allows the formation of correctly charged Gln-tRNA(Gln) through the transamidation of misacylated Glu-tRNA(Gln) in organisms which lack glutaminyl-tRNA synthetase. The reaction takes place in the presence of glutamine and ATP through an activated gamma-phospho-Glu-tRNA(Gln). The GatDE system is specific for glutamate and does not act on aspartate. This Haloquadratum walsbyi (strain DSM 16790 / HBSQ001) protein is Glutamyl-tRNA(Gln) amidotransferase subunit D.